The following is a 1503-amino-acid chain: MDSSTAALATASAKLDAVAQQGSSSWIGFFANIILGIISLVYSILYSVLKLTTFSIPSLLYTLFSTSLTVTMNATTLMLIIVLVFSLVSWFVRYRYLNMYSRLPPEPQRKEPDVDLFPDTHPGGSKPGLSNYLDEFLSAIKIFGYLERPVFHELTRSMQTRKLIAGETFNLEEEKGFCMVVDGLVEIFVKSARTGQHPVGESCSIDSDGSDEHEEYQAGNQRYQLLTEVHNGAPMSSLFSIMSLFTEDIKLRHGGDEGGEPTSATETYTSSRYGLGNDFSDQRESTVSVPTTPQLERSSSHGPTLHDGDANPSMGGRVPASIPPMSLDPPLQSRPKRPTTSRHATTSVHPDIIARATVDTTIAIIPASAFRRLIQIYPKYTAHIVHVILSRFQRVTLATAYNYLGLTSEVLHIEKSMIDNATCQLPNFLRGDALTRLKEKFNHERERIGEKDCTKGIALHNSSTGRRRKSTASLRKEAALQAITHGQRPSSVTASPPLQPRESGNKHTSNSGDLLMNIQLSRNGGRRSTSNMDPLTRQSTLLGSLETEVVSPLSQRTSNPFETRRHAHISLNKRETRDEDGLFRESILECMFKAIGLTANGTGAREPDSADASPRLTSYDQIRRGGYSSHNAFGFIDPYGGSVDGDADSITSGGTGPGLPVNPHALAHDMRDEVEIVFFPSGSVLVEQGERNPGLYYVVDGFLDVCMSAADESSGDILKASKNESSLNIGPGNQQGSAGRDRFMDANLGQSSSRKRASNVRRNVALIKPGGLAGYVGSISSHRSFIDVVAKTDVYVGFLPRQSLERIVDRYPIVLLTMAKRLTNLLPKLILHIDFALEWLQVNAGEVIFHGGEESEAIYIVLNGRLRLVEDRQEGGVDVRGEFGQGESIGELEVLTESARSGTLHAIRNTELVKFPRTLFNSLAQEHPNITIKISKIIASRMRKVVDDPSTFVGKEGALKASLNKSSSTLNLRTVAILPVTSGVPVVEFGNRLMGALTQVGTPNGATSLSQSAILNHLGRHAFNKMGKLKLSQYLADLEEKYGLVMYVADTNVNSPWTQTCITQADCILLVGLAEGSPEIGEYERFMLGMKSTARKVLVLLHADRYAEPGLTRSWLRNRMWINGGHHHVQMAFRTQSVPINPTAKRTGPSLKERVQILQAEIQKYTSRKVRHSPFYSPDAPFKGDFHRLARRLCGKSVGLVLGGGGARGLAHIGIIRAMEESGIPIDIVGGTSIGSFVGALYARHADVVPIFGLSKKFAGRMASVWRFALDLTYPSASYTTGHEFNRGIFKTFGKAQIEDFWLEFYCNTTNISKSRQEIHTSGYAWRYVRASMSLAGLLPPLCDEGSMLLDGGYIDNLTVSHMKSLGVDIIFAVDVGSLDDDVPQAYGDTLSGLWAFVNRWNPLSSTPNPPTLAEIQARLAYVSSVDALERAKMTPGCVYMRPPIDEYGTLEFGRFDEIVQVGYKYGLEFLQKLRDEGALPVVEETEAKKALRRTMAPRRASI.

The Cytoplasmic portion of the chain corresponds to 1 to 25 (MDSSTAALATASAKLDAVAQQGSSS). A helical membrane pass occupies residues 26-46 (WIGFFANIILGIISLVYSILY). Residues 47-71 (SVLKLTTFSIPSLLYTLFSTSLTVT) lie on the Lumenal side of the membrane. Residues 72-92 (MNATTLMLIIVLVFSLVSWFV) form a helical membrane-spanning segment. At 93 to 1503 (RYRYLNMYSR…RTMAPRRASI (1411 aa)) the chain is on the cytoplasmic side. 3 disordered regions span residues 252 to 348 (RHGG…TTSV), 454 to 561 (TKGI…SNPF), and 722 to 745 (KNESSLNIGPGNQQGSAGRDRFMD). 6 stretches are compositionally biased toward polar residues: residues 262–272 (TSATETYTSSR), 285–302 (STVSVPTTPQLERSSSHG), 487–496 (QRPSSVTASP), 506–542 (KHTSNSGDLLMNIQLSRNGGRRSTSNMDPLTRQSTLL), 552–561 (PLSQRTSNPF), and 723–737 (NESSLNIGPGNQQGS). Residues 658 to 777 (GLPV…GYVG) and 821 to 941 (RLTN…IASR) contribute to the a nucleoside 3',5'-cyclic phosphate site. Residues 1200-1364 (LVLGGGGARG…IDNLTVSHMK (165 aa)) form the PNPLA domain. A GXGXXG motif is present at residues 1204–1209 (GGGARG). Residues 1231–1235 (GTSIG) carry the GXSXG motif. Serine 1233 acts as the Nucleophile in catalysis. Aspartate 1351 functions as the Proton acceptor in the catalytic mechanism. Residues 1351 to 1353 (DGG) carry the DGA/G motif.

This sequence belongs to the NTE family.

Its subcellular location is the endoplasmic reticulum membrane. It catalyses the reaction a 1-acyl-sn-glycero-3-phosphocholine + H2O = sn-glycerol 3-phosphocholine + a fatty acid + H(+). Its activity is regulated as follows. Inhibited by organophosphorus esters. In terms of biological role, intracellular phospholipase B that catalyzes the double deacylation of phosphatidylcholine (PC) to glycerophosphocholine (GroPCho). Plays an important role in membrane lipid homeostasis. Responsible for the rapid PC turnover in response to inositol, elevated temperatures, or when choline is present in the growth medium. In Pyricularia oryzae (strain 70-15 / ATCC MYA-4617 / FGSC 8958) (Rice blast fungus), this protein is Lysophospholipase NTE1 (NTE1).